A 101-amino-acid chain; its full sequence is CRISPR-associated endoribonuclease Cas2 (101 aa).

Mg(2+) is bound at residue D8.

The protein belongs to the CRISPR-associated endoribonuclease Cas2 protein family. In terms of assembly, homodimer, forms a heterotetramer with a Cas1 homodimer. The cofactor is Mg(2+).

Functionally, CRISPR (clustered regularly interspaced short palindromic repeat), is an adaptive immune system that provides protection against mobile genetic elements (viruses, transposable elements and conjugative plasmids). CRISPR clusters contain sequences complementary to antecedent mobile elements and target invading nucleic acids. CRISPR clusters are transcribed and processed into CRISPR RNA (crRNA). Functions as a ssRNA-specific endoribonuclease. Involved in the integration of spacer DNA into the CRISPR cassette. The protein is CRISPR-associated endoribonuclease Cas2 of Ligilactobacillus salivarius (strain UCC118) (Lactobacillus salivarius).